We begin with the raw amino-acid sequence, 61 residues long: MFDNALLSLSHEQQQQAVEKIQVLMQRGMSSGEAIALVAKELREAHDNEKINSEKTKSAEK.

The protein belongs to the UPF0181 family.

The chain is UPF0181 protein MS1074 from Mannheimia succiniciproducens (strain KCTC 0769BP / MBEL55E).